Reading from the N-terminus, the 170-residue chain is Myelin-associated oligodendrocyte basic protein (170 aa).

Residues 69-170 (SRRATSPQKP…GSPTRAPRFW (102 aa)) form a disordered region. A compositionally biased stretch (low complexity) spans 82–92 (PAASPVVVRAP). Residues Ser-85, Ser-98, and Ser-107 each carry the phosphoserine modification. Copy 1 of the repeat occupies 93–101 (PAKPKSPPR). Pro residues predominate over residues 93 to 114 (PAKPKSPPRPAKPRSPPIPAKP). The interval 93-119 (PAKPKSPPRPAKPRSPPIPAKPRSPSR) is 3 X 9 AA approximate tandem repeats. The 2; half-length repeat unit spans residues 105–110 (PRSPPI). The stretch at 111-119 (PAKPRSPSR) is repeat 3. A compositionally biased stretch (basic and acidic residues) spans 118–130 (SRTERQPRPRPEV). A compositionally biased stretch (low complexity) spans 138 to 151 (KPPQKSKQPARSSP).

Expressed predominantly in oligodendrocytes, in CNS myelin of the cerebrum and spinal cord. No expression seen in sciatic nerve.

It localises to the cytoplasm. Its subcellular location is the perinuclear region. May play a role in compacting or stabilizing the myelin sheath, possibly by binding the negatively charged acidic phospholipids of the cytoplasmic membrane. In Rattus norvegicus (Rat), this protein is Myelin-associated oligodendrocyte basic protein (Mobp).